The chain runs to 375 residues: Chaperone protein DnaJ (375 aa).

The J domain occupies 5-70 (DYYEILGISK…EKRAAYDQYG (66 aa)). The CR-type zinc finger occupies 130–208 (GIIKEICIPT…CHGNGRVERS (79 aa)). Residues cysteine 143, cysteine 146, cysteine 160, cysteine 163, cysteine 182, cysteine 185, cysteine 196, and cysteine 199 each contribute to the Zn(2+) site. 4 CXXCXGXG motif repeats span residues 143–150 (CEKCRGTG), 160–167 (CMTCHGQG), 182–189 (CPTCHGHG), and 196–203 (CNKCHGNG).

Belongs to the DnaJ family. Homodimer. Requires Zn(2+) as cofactor.

The protein localises to the cytoplasm. In terms of biological role, participates actively in the response to hyperosmotic and heat shock by preventing the aggregation of stress-denatured proteins and by disaggregating proteins, also in an autonomous, DnaK-independent fashion. Unfolded proteins bind initially to DnaJ; upon interaction with the DnaJ-bound protein, DnaK hydrolyzes its bound ATP, resulting in the formation of a stable complex. GrpE releases ADP from DnaK; ATP binding to DnaK triggers the release of the substrate protein, thus completing the reaction cycle. Several rounds of ATP-dependent interactions between DnaJ, DnaK and GrpE are required for fully efficient folding. Also involved, together with DnaK and GrpE, in the DNA replication of plasmids through activation of initiation proteins. The chain is Chaperone protein DnaJ from Blochmanniella pennsylvanica (strain BPEN).